Consider the following 431-residue polypeptide: Glutamate-1-semialdehyde 2,1-aminomutase (431 aa).

Lysine 266 bears the N6-(pyridoxal phosphate)lysine mark.

Belongs to the class-III pyridoxal-phosphate-dependent aminotransferase family. HemL subfamily. As to quaternary structure, homodimer. It depends on pyridoxal 5'-phosphate as a cofactor.

The protein resides in the cytoplasm. The enzyme catalyses (S)-4-amino-5-oxopentanoate = 5-aminolevulinate. Its pathway is porphyrin-containing compound metabolism; protoporphyrin-IX biosynthesis; 5-aminolevulinate from L-glutamyl-tRNA(Glu): step 2/2. This chain is Glutamate-1-semialdehyde 2,1-aminomutase, found in Wolinella succinogenes (strain ATCC 29543 / DSM 1740 / CCUG 13145 / JCM 31913 / LMG 7466 / NCTC 11488 / FDC 602W) (Vibrio succinogenes).